A 207-amino-acid polypeptide reads, in one-letter code: Ras-related protein Rab-7a (207 aa).

Thr2 is subject to N-acetylthreonine. Ser17, Gly18, Val19, Gly20, Lys21, Thr22, Ser23, Ser34, Asn35, Tyr37, and Thr40 together coordinate GTP. Mg(2+) is bound at residue Thr22. A Switch 1 motif is present at residues 28–41 (YVNKKFSNQYKATI). The Mg(2+) site is built by Thr40 and Asp63. Gly66 is a GTP binding site. The short motif at 67–82 (QERFQSLGVAFYRGAD) is the Switch 2 element. The residue at position 72 (Ser72) is a Phosphoserine. The GTP site is built by Asn125, Lys126, Asp128, Ala156, and Lys157. Residues Lys191 and Lys194 each participate in a glycyl lysine isopeptide (Lys-Gly) (interchain with G-Cter in ubiquitin) cross-link. 2 S-geranylgeranyl cysteine lipidation sites follow: Cys205 and Cys207. Cys207 is modified (cysteine methyl ester).

This sequence belongs to the small GTPase superfamily. Rab family. Interacts with NTRK1/TRKA. Interacts with RILP. Interacts with PSMA7. Interacts with RNF115. Interacts with FYCO1. Interacts with the PIK3C3/VPS34-PIK3R4 complex. The GTP-bound form interacts with OSBPL1A. The GTP-bound form interacts with RAC1. Interacts with CLN3. Interacts with CHM, the substrate-binding subunit of the Rab geranylgeranyltransferase complex. Interacts with C9orf72. Does not interact with HPS4 and the BLOC-3 complex (heterodimer of HPS1 and HPS4). Interacts with CLN5. Interacts with PLEKHM1 (via N- and C-terminus). Interacts with PRPH; the interaction is direct. Interacts with VPS13A. The GDP-bound form interacts with RIMOC1. Interacts with the MON1A-CCZ1B complex and this interaction is enhanced in the presence of RIMOC1. Interacts with VPS39 and VPS41. Forms a ternary complex with LAMP2 and RUFY4; the interaction with LAMP2 is mediated by RUFY4 (via RUN and coiled coil domains). The cofactor is Mg(2+). In terms of processing, deubiquitination at Lys-191 and Lys-194 by USP32. Phosphorylated at Ser-72 by LRRK1; phosphorylation is dependent on protein kinase C (PKC) activation of LRRK1. Post-translationally, prenylated. Prenylation is required for association with cellular membranes.

The protein resides in the cytoplasmic vesicle. The protein localises to the phagosome membrane. It is found in the late endosome membrane. Its subcellular location is the lysosome membrane. It localises to the melanosome membrane. The protein resides in the autophagosome membrane. The protein localises to the lipid droplet. It is found in the endosome membrane. Its subcellular location is the mitochondrion membrane. The catalysed reaction is GTP + H2O = GDP + phosphate + H(+). With respect to regulation, regulated by guanine nucleotide exchange factors (GEFs) which promote the exchange of bound GDP for free GTP. Regulated by GTPase activating proteins (GAPs) which increase the GTP hydrolysis activity. Inhibited by GDP dissociation inhibitors (GDIs). Its function is as follows. The small GTPases Rab are key regulators of intracellular membrane trafficking, from the formation of transport vesicles to their fusion with membranes. Rabs cycle between an inactive GDP-bound form and an active GTP-bound form that is able to recruit to membranes different sets of downstream effectors directly responsible for vesicle formation, movement, tethering and fusion. In its active state, RAB7A binds to a variety of effector proteins playing a key role in the regulation of endo-lysosomal trafficking. Governs early-to-late endosomal maturation, microtubule minus-end as well as plus-end directed endosomal migration and positioning, and endosome-lysosome transport through different protein-protein interaction cascades. Also plays a central role in growth-factor-mediated cell signaling, nutrient-transporter-mediated nutrient uptake, neurotrophin transport in the axons of neurons and lipid metabolism. Also involved in regulation of some specialized endosomal membrane trafficking, such as maturation of melanosomes, pathogen-induced phagosomes (or vacuoles) and autophagosomes. Plays a role in the maturation and acidification of phagosomes that engulf pathogens, such as S.aureus and Mycobacteria. Plays a role in the fusion of phagosomes with lysosomes. In concert with RAC1, plays a role in regulating the formation of RBs (ruffled borders) in osteoclasts. Controls the endosomal trafficking and neurite outgrowth signaling of NTRK1/TRKA. Regulates the endocytic trafficking of the EGF-EGFR complex by regulating its lysosomal degradation. Involved in the ADRB2-stimulated lipolysis through lipophagy, a cytosolic lipase-independent autophagic pathway. Required for the exosomal release of SDCBP, CD63 and syndecan. Required for vesicular trafficking and cell surface expression of ACE2. May play a role in PRPH neuronal intermediate filament assembly. The chain is Ras-related protein Rab-7a (RAB7A) from Pongo abelii (Sumatran orangutan).